A 31-amino-acid polypeptide reads, in one-letter code: QRQCQNVQNCYKYCMSPKKCEYGTCYCEPSP.

Gln1 carries the pyrrolidone carboxylic acid modification. Cystine bridges form between Cys4-Cys20, Cys10-Cys25, and Cys14-Cys27. Proline amide is present on Pro31.

It belongs to the short scorpion toxin superfamily. Potassium channel inhibitor family. Alpha-KTx 17 subfamily. The N-terminus is blocked. In terms of tissue distribution, expressed by the venom gland.

The protein localises to the secreted. Blocker of potassium channels (Kv). The sequence is that of Toxin BmKK12 from Olivierus martensii (Manchurian scorpion).